Here is a 392-residue protein sequence, read N- to C-terminus: Succinyl-diaminopimelate desuccinylase (392 aa).

His78 contacts Zn(2+). The active site involves Asp80. Asp110 serves as a coordination point for Zn(2+). Glu145 acts as the Proton acceptor in catalysis. Residues Glu146, Glu174, and His363 each contribute to the Zn(2+) site.

Belongs to the peptidase M20A family. DapE subfamily. In terms of assembly, homodimer. It depends on Zn(2+) as a cofactor. Co(2+) serves as cofactor.

It carries out the reaction N-succinyl-(2S,6S)-2,6-diaminopimelate + H2O = (2S,6S)-2,6-diaminopimelate + succinate. The protein operates within amino-acid biosynthesis; L-lysine biosynthesis via DAP pathway; LL-2,6-diaminopimelate from (S)-tetrahydrodipicolinate (succinylase route): step 3/3. Its function is as follows. Catalyzes the hydrolysis of N-succinyl-L,L-diaminopimelic acid (SDAP), forming succinate and LL-2,6-diaminopimelate (DAP), an intermediate involved in the bacterial biosynthesis of lysine and meso-diaminopimelic acid, an essential component of bacterial cell walls. This chain is Succinyl-diaminopimelate desuccinylase, found in Methylobacterium radiotolerans (strain ATCC 27329 / DSM 1819 / JCM 2831 / NBRC 15690 / NCIMB 10815 / 0-1).